A 205-amino-acid polypeptide reads, in one-letter code: MIGKLKGVIDSYGEDYVILDVGGVGYQVHCASRTLQALPSPGQAAVLSIETYVREDQIKLFGFRTDHEREWFRLLQTVQGVGARVALAVLGTLSPADLASAIALRDKASVARTPGIGPKVAERIVTELKDKAPSFANVDPTVVHLAGDLDDQRAPRPVRDAISALVNLGYGQPQATAAIAAASRGAGENAETAQLIRLGLKELSK.

Residues 1-64 (MIGKLKGVID…EDQIKLFGFR (64 aa)) are domain I. Positions 65–143 (TDHEREWFRL…SFANVDPTVV (79 aa)) are domain II. Residues 144 to 154 (HLAGDLDDQRA) form a flexible linker region. Residues 154 to 205 (APRPVRDAISALVNLGYGQPQATAAIAAASRGAGENAETAQLIRLGLKELSK) are domain III.

Belongs to the RuvA family. Homotetramer. Forms an RuvA(8)-RuvB(12)-Holliday junction (HJ) complex. HJ DNA is sandwiched between 2 RuvA tetramers; dsDNA enters through RuvA and exits via RuvB. An RuvB hexamer assembles on each DNA strand where it exits the tetramer. Each RuvB hexamer is contacted by two RuvA subunits (via domain III) on 2 adjacent RuvB subunits; this complex drives branch migration. In the full resolvosome a probable DNA-RuvA(4)-RuvB(12)-RuvC(2) complex forms which resolves the HJ.

It is found in the cytoplasm. Its function is as follows. The RuvA-RuvB-RuvC complex processes Holliday junction (HJ) DNA during genetic recombination and DNA repair, while the RuvA-RuvB complex plays an important role in the rescue of blocked DNA replication forks via replication fork reversal (RFR). RuvA specifically binds to HJ cruciform DNA, conferring on it an open structure. The RuvB hexamer acts as an ATP-dependent pump, pulling dsDNA into and through the RuvAB complex. HJ branch migration allows RuvC to scan DNA until it finds its consensus sequence, where it cleaves and resolves the cruciform DNA. This Nitrobacter winogradskyi (strain ATCC 25391 / DSM 10237 / CIP 104748 / NCIMB 11846 / Nb-255) protein is Holliday junction branch migration complex subunit RuvA.